Here is a 121-residue protein sequence, read N- to C-terminus: Small ribosomal subunit protein uS13 (121 aa).

Residues 91–121 form a disordered region; it reads HRRGLPVRGQNTKNNARTRKGPRKTVANKKK. Basic residues predominate over residues 106–121; the sequence is ARTRKGPRKTVANKKK.

The protein belongs to the universal ribosomal protein uS13 family. Part of the 30S ribosomal subunit. Forms a loose heterodimer with protein S19. Forms two bridges to the 50S subunit in the 70S ribosome.

In terms of biological role, located at the top of the head of the 30S subunit, it contacts several helices of the 16S rRNA. In the 70S ribosome it contacts the 23S rRNA (bridge B1a) and protein L5 of the 50S subunit (bridge B1b), connecting the 2 subunits; these bridges are implicated in subunit movement. Contacts the tRNAs in the A and P-sites. This is Small ribosomal subunit protein uS13 from Lysinibacillus sphaericus (strain C3-41).